Here is a 398-residue protein sequence, read N- to C-terminus: MTKTEGKTASAAVKDILLSNPDGLREVIRTVMQEVLEAEMDEALGAAKGERTPERLGYRSGHYGRTLITRVGKLELRVPQDRSGHFSTELFERYQRSERALVATLAEMYVQGVSTRKVKAITEELCGHAFSASSISAINKRLDESLKAFAERSLEEPFAYLILDARYEKVREAGVVMSQAVLIAVGIDWDGRRQILSVEMAGRESRSAWKDFLVRLKGRGLKGVELVVSDDHAGLVAAIGEVIPEAAWQRCYVHFLRNALDHLPRKHGDDCLQELRWLYDRRDLDEAKADLAAWLGKWSVRYPRLTSWVEETIEQTLTFFRLPRQHHKHLKSTNMLERLNEEIRRRTYVVRIFPNTESCLRLVRALAVETHENWMEANRYINMDDLREHKKLALRQAA.

Belongs to the transposase mutator family.

Required for the transposition of the insertion element. This chain is Transposase for insertion sequence element ISRM5, found in Rhizobium meliloti (strain 1021) (Ensifer meliloti).